A 538-amino-acid polypeptide reads, in one-letter code: Mevalonate kinase erg12 (538 aa).

Positions 1 to 87 (MGNPRGRRTN…RNMSRKPSSP (87 aa)) are disordered. A compositionally biased stretch (polar residues) spans 9-29 (TNGSIKTSKGTQRGTVSNLLS). A compositionally biased stretch (low complexity) spans 57–69 (TTPSTTESTLKTT). ATP-binding positions include Lys-99, Ser-231, and 236–242 (GAGLGSS). Mg(2+) is bound by residues Ser-242 and Glu-287. Catalysis depends on Asp-298, which acts as the Proton acceptor.

This sequence belongs to the GHMP kinase family. Mevalonate kinase subfamily. In terms of assembly, homodimer. The cofactor is Mg(2+).

The protein localises to the cytoplasm. Its subcellular location is the cytosol. It carries out the reaction (R)-mevalonate + ATP = (R)-5-phosphomevalonate + ADP + H(+). Its pathway is isoprenoid biosynthesis; isopentenyl diphosphate biosynthesis via mevalonate pathway; isopentenyl diphosphate from (R)-mevalonate: step 1/3. In terms of biological role, mevalonate kinase; part of the second module of ergosterol biosynthesis pathway that includes the middle steps of the pathway. Erg12 converts mevalonate into 5-phosphomevalonate. The second module is carried out in the vacuole and involves the formation of farnesyl diphosphate, which is also an important intermediate in the biosynthesis of ubiquinone, dolichol, heme and prenylated proteins. Activity by the mevalonate kinase erg12 (AFUA_4G07780) first converts mevalonate into 5-phosphomevalonate. 5-phosphomevalonate is then further converted to 5-diphosphomevalonate by the phosphomevalonate kinase erg8 (AFUA_5G10680). The diphosphomevalonate decarboxylase mvd1 (AFUA_4G07130) then produces isopentenyl diphosphate. The isopentenyl-diphosphate delta-isomerase idi1 (AFUA_6G11160) then catalyzes the 1,3-allylic rearrangement of the homoallylic substrate isopentenyl (IPP) to its highly electrophilic allylic isomer, dimethylallyl diphosphate (DMAPP). Finally the farnesyl diphosphate synthase erg20 (AFUA_5G02450) catalyzes the sequential condensation of isopentenyl pyrophosphate with dimethylallyl pyrophosphate, and then with the resultant geranylpyrophosphate to the ultimate product farnesyl pyrophosphate. The protein is Mevalonate kinase erg12 of Aspergillus fumigatus (strain ATCC MYA-4609 / CBS 101355 / FGSC A1100 / Af293) (Neosartorya fumigata).